The primary structure comprises 293 residues: Ribosomal protein L11 methyltransferase (293 aa).

S-adenosyl-L-methionine contacts are provided by Thr-145, Gly-166, Asp-188, and Asn-230.

The protein belongs to the methyltransferase superfamily. PrmA family.

It localises to the cytoplasm. The catalysed reaction is L-lysyl-[protein] + 3 S-adenosyl-L-methionine = N(6),N(6),N(6)-trimethyl-L-lysyl-[protein] + 3 S-adenosyl-L-homocysteine + 3 H(+). Its function is as follows. Methylates ribosomal protein L11. In Yersinia pseudotuberculosis serotype I (strain IP32953), this protein is Ribosomal protein L11 methyltransferase.